An 894-amino-acid chain; its full sequence is Valine--tRNA ligase (894 aa).

Positions 1–22 are enriched in polar residues; the sequence is MKSIQTPSKSHTNTKETPVMSQ. The interval 1–28 is disordered; that stretch reads MKSIQTPSKSHTNTKETPVMSQEETKGY. The 'HIGH' region motif lies at 69–79; that stretch reads PNVTGSLHIGH. Residues 554–558 carry the 'KMSKS' region motif; sequence KMSKS. Residue lysine 557 participates in ATP binding. Residues 832–894 adopt a coiled-coil conformation; the sequence is IISRLEKQQE…VKVELQGIKG (63 aa).

The protein belongs to the class-I aminoacyl-tRNA synthetase family. ValS type 1 subfamily. In terms of assembly, monomer.

The protein resides in the cytoplasm. The catalysed reaction is tRNA(Val) + L-valine + ATP = L-valyl-tRNA(Val) + AMP + diphosphate. Catalyzes the attachment of valine to tRNA(Val). As ValRS can inadvertently accommodate and process structurally similar amino acids such as threonine, to avoid such errors, it has a 'posttransfer' editing activity that hydrolyzes mischarged Thr-tRNA(Val) in a tRNA-dependent manner. The chain is Valine--tRNA ligase from Wolinella succinogenes (strain ATCC 29543 / DSM 1740 / CCUG 13145 / JCM 31913 / LMG 7466 / NCTC 11488 / FDC 602W) (Vibrio succinogenes).